A 250-amino-acid chain; its full sequence is Aliphatic sulfonates import ATP-binding protein SsuB 2 (250 aa).

One can recognise an ABC transporter domain in the interval 13–229 (VRLQGLTRSF…SYRDPLLGEY (217 aa)). 45–52 (GHSGSGKS) is an ATP binding site.

Belongs to the ABC transporter superfamily. Aliphatic sulfonates importer (TC 3.A.1.17.2) family. The complex is composed of two ATP-binding proteins (SsuB), two transmembrane proteins (SsuC) and a solute-binding protein (SsuA).

The protein resides in the cell membrane. The enzyme catalyses ATP + H2O + aliphatic sulfonate-[sulfonate-binding protein]Side 1 = ADP + phosphate + aliphatic sulfonateSide 2 + [sulfonate-binding protein]Side 1.. Its function is as follows. Part of the ABC transporter complex SsuABC involved in aliphatic sulfonates import. Responsible for energy coupling to the transport system. This chain is Aliphatic sulfonates import ATP-binding protein SsuB 2, found in Streptomyces avermitilis (strain ATCC 31267 / DSM 46492 / JCM 5070 / NBRC 14893 / NCIMB 12804 / NRRL 8165 / MA-4680).